The sequence spans 142 residues: Large ribosomal subunit protein uL11 (142 aa).

The protein belongs to the universal ribosomal protein uL11 family. Part of the ribosomal stalk of the 50S ribosomal subunit. Interacts with L10 and the large rRNA to form the base of the stalk. L10 forms an elongated spine to which L12 dimers bind in a sequential fashion forming a multimeric L10(L12)X complex. In terms of processing, one or more lysine residues are methylated.

Forms part of the ribosomal stalk which helps the ribosome interact with GTP-bound translation factors. In Pectobacterium atrosepticum (strain SCRI 1043 / ATCC BAA-672) (Erwinia carotovora subsp. atroseptica), this protein is Large ribosomal subunit protein uL11.